A 159-amino-acid chain; its full sequence is Transcription elongation factor GreA (159 aa).

The protein belongs to the GreA/GreB family.

Necessary for efficient RNA polymerase transcription elongation past template-encoded arresting sites. The arresting sites in DNA have the property of trapping a certain fraction of elongating RNA polymerases that pass through, resulting in locked ternary complexes. Cleavage of the nascent transcript by cleavage factors such as GreA or GreB allows the resumption of elongation from the new 3'terminus. GreA releases sequences of 2 to 3 nucleotides. The polypeptide is Transcription elongation factor GreA (Psychromonas ingrahamii (strain DSM 17664 / CCUG 51855 / 37)).